Consider the following 217-residue polypeptide: Protein-L-isoaspartate O-methyltransferase (217 aa).

S61 is a catalytic residue.

The protein belongs to the methyltransferase superfamily. L-isoaspartyl/D-aspartyl protein methyltransferase family.

Its subcellular location is the cytoplasm. It catalyses the reaction [protein]-L-isoaspartate + S-adenosyl-L-methionine = [protein]-L-isoaspartate alpha-methyl ester + S-adenosyl-L-homocysteine. Functionally, catalyzes the methyl esterification of L-isoaspartyl residues in peptides and proteins that result from spontaneous decomposition of normal L-aspartyl and L-asparaginyl residues. It plays a role in the repair and/or degradation of damaged proteins. In Brucella anthropi (strain ATCC 49188 / DSM 6882 / CCUG 24695 / JCM 21032 / LMG 3331 / NBRC 15819 / NCTC 12168 / Alc 37) (Ochrobactrum anthropi), this protein is Protein-L-isoaspartate O-methyltransferase.